Here is a 365-residue protein sequence, read N- to C-terminus: Peptide chain release factor 2 (365 aa).

N5-methylglutamine is present on Q252.

This sequence belongs to the prokaryotic/mitochondrial release factor family. Post-translationally, methylated by PrmC. Methylation increases the termination efficiency of RF2.

It is found in the cytoplasm. Peptide chain release factor 2 directs the termination of translation in response to the peptide chain termination codons UGA and UAA. In Acidithiobacillus ferrooxidans (strain ATCC 23270 / DSM 14882 / CIP 104768 / NCIMB 8455) (Ferrobacillus ferrooxidans (strain ATCC 23270)), this protein is Peptide chain release factor 2.